A 513-amino-acid polypeptide reads, in one-letter code: MHLNPSEISELIKSRIEGLEATAEVRTQGTVVSVTDGIVRIHGLSDVMQGEMLEFPGNTFGLALNLERDSVGAVVLGEYEHITEGDTVKCTGRILEVPVGEELIGRVVNALGQPIDGKGPITTKHSEPIEKIAPGVVWRQSVNQPVQTGLKAIDAMVPIGRGQRELIIGDRQTGKTAVAVDAIINQKGENMICIYVAIGQKASSISNVVRKLEEHGAMEYTIVVAATASESAAMQFIAPYSGCTMGEYFRDTGRDALIVYDDLTKQAWAYRQISLLLRRPPGREAYPGDVFYLHSRLLERAARVSAAYVEKETNGAVKGKTGSLTALPVIETQAGDVTAFVPTNVISITDGQIFLESDLFNAGIRPAINAGISVSRVGGAAQTKVIKKLGGGVRLALAQYRELAAFAQFASDLDEATRKQLERGKMVTELMKQPQYSTLSVSEMALTLFAVNKGYLDDVEVSRALAFESALRGFIRSKYGAILDKIETTKDLDAETEKELDAAIQDFKKNGTY.

169 to 176 (GDRQTGKT) lines the ATP pocket.

Belongs to the ATPase alpha/beta chains family. F-type ATPases have 2 components, CF(1) - the catalytic core - and CF(0) - the membrane proton channel. CF(1) has five subunits: alpha(3), beta(3), gamma(1), delta(1), epsilon(1). CF(0) has three main subunits: a(1), b(2) and c(9-12). The alpha and beta chains form an alternating ring which encloses part of the gamma chain. CF(1) is attached to CF(0) by a central stalk formed by the gamma and epsilon chains, while a peripheral stalk is formed by the delta and b chains.

It localises to the cell inner membrane. It catalyses the reaction ATP + H2O + 4 H(+)(in) = ADP + phosphate + 5 H(+)(out). In terms of biological role, produces ATP from ADP in the presence of a proton gradient across the membrane. The alpha chain is a regulatory subunit. This chain is ATP synthase subunit alpha 1, found in Nitrosospira multiformis (strain ATCC 25196 / NCIMB 11849 / C 71).